The chain runs to 319 residues: Ubiquinone biosynthesis protein COQ9, mitochondrial (319 aa).

Residues 1-45 constitute a mitochondrion transit peptide; sequence MAATVAFSGVLRRAGWRLLQLRCLPVPRCRPALAPRAFRASAMQL. The SIFI-degron motif lies at 17-32; sequence RLLQLRCLPVPRCRPA. The segment at 46-99 is disordered; it reads RSLDQQKDQPPPSSSQQQSEAQGAEEPNPEALRSPPRYTDQGGEEEEDYESEEQ. The segment covering 87-98 has biased composition (acidic residues); it reads GGEEEEDYESEE. Lys176 is subject to N6-acetyllysine. Residue Arg245 participates in a 1,2-diacylglycero-3-phosphoethanolamine binding.

This sequence belongs to the COQ9 family. In terms of assembly, homodimer. Heterodimer; two heterodimers of COQ7:COQ9 come together on the same side of the lipid pseudo-bilayer and form a curved tetramer with a hydrophobic surface suitable for membrane interaction. These two tetramers assemble into a soluble octamer with a pseudo-bilayer of lipids captured within. Interacts with COQ7; this interaction allows ubiquinone (CoQ) isoprene intermediates presentation to COQ7 and facilitates the COQ7-mediated hydroxylase step. Post-translationally, in response to mitochondrial stress, the precursor protein is ubiquitinated by the SIFI complex in the cytoplasm before mitochondrial import, leading to its degradation. Within the SIFI complex, UBR4 initiates ubiquitin chain that are further elongated or branched by KCMF1.

The protein resides in the mitochondrion. It participates in cofactor biosynthesis; ubiquinone biosynthesis. Its function is as follows. Membrane-associated protein that warps the membrane surface to access and bind aromatic isoprenes with high specificity, including ubiquinone (CoQ) isoprene intermediates and presents them directly to COQ7, therefore facilitating the COQ7-mediated hydroxylase step. Participates in the biosynthesis of coenzyme Q, also named ubiquinone, an essential lipid-soluble electron transporter for aerobic cellular respiration. The sequence is that of Ubiquinone biosynthesis protein COQ9, mitochondrial from Bos taurus (Bovine).